A 262-amino-acid chain; its full sequence is F-actin-capping protein subunit alpha (262 aa).

The protein belongs to the F-actin-capping protein alpha subunit family. As to quaternary structure, heterodimer of an alpha and a beta subunit.

Its subcellular location is the cytoplasm. It is found in the cytoskeleton. In terms of biological role, F-actin-capping proteins bind in a Ca(2+)-independent manner to the fast growing ends of actin filaments (barbed end) thereby blocking the exchange of subunits at these ends. Unlike other capping proteins (such as gelsolin and severin), these proteins do not sever actin filaments. This Yarrowia lipolytica (strain CLIB 122 / E 150) (Yeast) protein is F-actin-capping protein subunit alpha (CAP1).